The chain runs to 90 residues: Putative septation protein SpoVG (90 aa).

It belongs to the SpoVG family.

In terms of biological role, could be involved in septation. The protein is Putative septation protein SpoVG of Clostridium perfringens (strain SM101 / Type A).